The chain runs to 808 residues: N-terminal kinase-like protein (808 aa).

The Protein kinase domain occupies 14–314 (FELIPEPPEG…PEDFCRHKVL (301 aa)). 3 HEAT repeats span residues 350-388 (IIPVVVKMFSSTDRAMRIRLLQQMEQFIQYLDEPTVNTQ), 389-427 (IFPHVVHGFLDTNPAIREQTVKSMLLLAPKLNEANLNVE), and 507-545 (ILPVLCGLTVDPEKSVRDQAFKAIRSFLSKLESVSEDPT). 3 disordered regions span residues 540–566 (VSEDPTQLEEVEKDVHAASSPGMGGAA), 587–646 (SHPT…RWDD), and 658–808 (SVLA…RKLD). Residues 556-566 (AASSPGMGGAA) show a composition bias toward low complexity. The segment covering 587-600 (SHPTTAPTETNIPQ) has biased composition (polar residues). Pro residues predominate over residues 601 to 617 (RPTPEGVPAPAPTPVPA). Polar residues predominate over residues 660–680 (LAQQDDWSTGGQVSRASQVSN). Residues 681 to 690 (SDHKSSKSPE) show a composition bias toward basic and acidic residues. At serine 754 the chain carries Phosphoserine. Over residues 755 to 764 (WGEDNWEGLE) the composition is skewed to acidic residues. Positions 761 to 797 (EGLETDSRQVKAELARKKREERRREMEAKRAERKVAK) form a coiled coil. Composition is skewed to basic and acidic residues over residues 765-775 (TDSRQVKAELA) and 782-795 (RRREMEAKRAERKV). Residues 793–808 (RKVAKGPMKLGARKLD) are interaction with COPB1.

The protein belongs to the protein kinase superfamily. In terms of assembly, interacts with GORAB. Interacts with COPA, COPB1 and COPB2. Homooligomer. Interacts with AP2B1. As to expression, ubiquitous.

It localises to the cytoplasm. The protein localises to the cytoskeleton. Its subcellular location is the microtubule organizing center. It is found in the centrosome. The protein resides in the endoplasmic reticulum-Golgi intermediate compartment. It localises to the golgi apparatus. The protein localises to the cis-Golgi network. Its subcellular location is the nucleus. Regulates COPI-mediated retrograde protein traffic at the interface between the Golgi apparatus and the endoplasmic reticulum. Involved in the maintenance of the Golgi apparatus morphology. In terms of biological role, acts as a transcriptional activator. It binds to three different types of GC-rich DNA binding sites (box-A, -B and -C) in the beta-polymerase promoter region. It also binds to the TERT promoter region. This Homo sapiens (Human) protein is N-terminal kinase-like protein (SCYL1).